A 256-amino-acid polypeptide reads, in one-letter code: uncharacterized protein (256 aa).

Residues 213–243 (TMSMEAKLEAAKKTLEKFKQEAASKRAKRTK) are a coiled coil. A disordered region spans residues 231 to 256 (KQEAASKRAKRTKPSGSKTTRSTGRK). Over residues 244 to 256 (PSGSKTTRSTGRK) the composition is skewed to polar residues.

This is an uncharacterized protein from Acanthamoeba polyphaga (Amoeba).